The primary structure comprises 112 residues: Nucleoid-associated protein CV_1611 (112 aa).

It belongs to the YbaB/EbfC family. In terms of assembly, homodimer.

It localises to the cytoplasm. Its subcellular location is the nucleoid. Binds to DNA and alters its conformation. May be involved in regulation of gene expression, nucleoid organization and DNA protection. In Chromobacterium violaceum (strain ATCC 12472 / DSM 30191 / JCM 1249 / CCUG 213 / NBRC 12614 / NCIMB 9131 / NCTC 9757 / MK), this protein is Nucleoid-associated protein CV_1611.